The following is a 33-amino-acid chain: Protamine-M6/M7 (33 aa).

Positions 1 to 33 (PRRRRETSRPIRRRRRARRAPIRRRRRVVRRRR) are disordered.

In terms of tissue distribution, testis.

Its subcellular location is the nucleus. It is found in the chromosome. Protamines substitute for histones in the chromatin of sperm during the haploid phase of spermatogenesis. They compact sperm DNA into a highly condensed, stable and inactive complex. This chain is Protamine-M6/M7, found in Mugil cephalus (Flathead mullet).